The primary structure comprises 317 residues: Ferrochelatase (317 aa).

Positions 184 and 259 each coordinate Fe cation.

This sequence belongs to the ferrochelatase family.

The protein localises to the cytoplasm. It catalyses the reaction heme b + 2 H(+) = protoporphyrin IX + Fe(2+). The protein operates within porphyrin-containing compound metabolism; protoheme biosynthesis; protoheme from protoporphyrin-IX: step 1/1. In terms of biological role, catalyzes the ferrous insertion into protoporphyrin IX. The polypeptide is Ferrochelatase (Chlamydia muridarum (strain MoPn / Nigg)).